The chain runs to 175 residues: ATP synthase subunit b (175 aa).

Residues 23 to 43 traverse the membrane as a helical segment; sequence TGITFLVLLFVLGKFAWGPIV.

Belongs to the ATPase B chain family. In terms of assembly, F-type ATPases have 2 components, F(1) - the catalytic core - and F(0) - the membrane proton channel. F(1) has five subunits: alpha(3), beta(3), gamma(1), delta(1), epsilon(1). F(0) has three main subunits: a(1), b(2) and c(10-14). The alpha and beta chains form an alternating ring which encloses part of the gamma chain. F(1) is attached to F(0) by a central stalk formed by the gamma and epsilon chains, while a peripheral stalk is formed by the delta and b chains.

Its subcellular location is the cell inner membrane. In terms of biological role, f(1)F(0) ATP synthase produces ATP from ADP in the presence of a proton or sodium gradient. F-type ATPases consist of two structural domains, F(1) containing the extramembraneous catalytic core and F(0) containing the membrane proton channel, linked together by a central stalk and a peripheral stalk. During catalysis, ATP synthesis in the catalytic domain of F(1) is coupled via a rotary mechanism of the central stalk subunits to proton translocation. Component of the F(0) channel, it forms part of the peripheral stalk, linking F(1) to F(0). The chain is ATP synthase subunit b from Anaeromyxobacter sp. (strain Fw109-5).